The following is an 84-amino-acid chain: Small ribosomal subunit protein uS17 (84 aa).

It belongs to the universal ribosomal protein uS17 family. Part of the 30S ribosomal subunit.

Its function is as follows. One of the primary rRNA binding proteins, it binds specifically to the 5'-end of 16S ribosomal RNA. This is Small ribosomal subunit protein uS17 from Salmonella typhi.